Reading from the N-terminus, the 141-residue chain is MTLQGSSGVNNGGYVNQCAACRHQRRRCTPDCFFRPYFPAERHQEFQNFHRLHSNTRLQKKLKELGLSPEEQREAMSSIIYESNIRSQFPGPSVAVTNTFSIFEPKSHSSPLNYVAPVIKSPPLSSIPPPPASLIPPLTTS.

Residues 16 to 119 (NQCAACRHQR…SPLNYVAPVI (104 aa)) enclose the LOB domain.

It belongs to the LOB domain-containing protein family.

The polypeptide is LOB domain-containing protein 34 (LBD34) (Arabidopsis thaliana (Mouse-ear cress)).